A 540-amino-acid chain; its full sequence is MNTTKLLGTGALSPSFVFDHDSGNAIFGLSSSTLVVLVAMIAVSTLTLKSVLPGDRSINLPGPRGWPIVGSWFDLGNNWAEYFRQAAKEYGDVFKVHIGNRTVVVVNSPKAAHILFNEHGSSLISRPWFYTFHGVLSKSSAFTIGTSAWSDSTKNKRKAAATALNRPAVQSYMPIIVEESLDAVRRILNDGNAGKNGIVPYSYFQRLALNTSFQVNYGFRMGERDDGLFDEISEVIAKVASVRAVTGSLQDYVPLMRYLPANAKSKAAASYGLRRKKFMSKLYEELEQRVNQGKDESCITGNILKDTESRKKLSRLEIDSICLSMVSAGLDTFANTMIWTIGFLAKHPEIQRKAQAELLAHYPNRELPHVDSEDLVYIHAMAKEASRLFNVFRICLPRTNVSDVTYNNAVIPAGTTFFLNSWACNVDAEKFADPFEFKPERFMDKSASNAHVENKMGGVETYAFGMGRRMCPGVFLALREIYTTLVFLTHFFDIAPDGEYDIDPLTAVEDGRAFSVRPKPFKVRCTPRPGVDLSPVLDKQ.

A glycan (N-linked (GlcNAc...) asparagine) is linked at asparagine 2. Residues 26 to 46 (IFGLSSSTLVVLVAMIAVSTL) form a helical membrane-spanning segment. Asparagine 100, asparagine 210, and asparagine 400 each carry an N-linked (GlcNAc...) asparagine glycan. Heme is bound at residue cysteine 471.

This sequence belongs to the cytochrome P450 family. Requires heme as cofactor.

It localises to the membrane. Its pathway is secondary metabolite biosynthesis. Cytochrome P450 monooxygenase; part of the gene cluster that mediates the biosynthesis of itaconic acid and 2-hydroxyparaconate. Cis-aconitate is secreted by the mitochondrial tricarboxylate transporter MTT1. In the cytosol cis-aconitate is converted into trans-aconitate via isomerization by the aconitate-delta-isomerase ADI1. Decarboxylation of trans-aconitate by the trans-aconitate decarboxylase TAD1 then leads then to the production of itaconic acid. The cytochrome P450 monooxygenase CYP3 further converts itaconate to 2-hydroxyparaconate via oxidation of the double bond, leading to a transient epoxide, which can subsequently be lactonized to produce 2-hydroxyparaconate. Secretion of itaconate and possibly 2-hydroxyparaconate into the medium is mediated by the major facilitator ITP1. The glyoxalase domain-containing protein RDO1 is not involved in the biosynthesis of itaconate and 2-hydroxyparaconate, however, it might play a role in the further conversion of 2-hydroxyparaconate to itatartarate. The chain is Cytochrome P450 monooxygenase CYP3 from Mycosarcoma maydis (Corn smut fungus).